A 485-amino-acid chain; its full sequence is NADH-quinone oxidoreductase subunit N (485 aa).

The next 14 helical transmembrane spans lie at 8–28 (LIAL…MLCI), 35–55 (FVNA…LYFV), 75–95 (FYTG…YPWL), 105–125 (FYLL…ANHL), 127–147 (SLFI…GYAF), 159–179 (YMLL…LIYA), 203–223 (LLAG…LVPF), 235–255 (PAPV…GAVM), 271–291 (IVLS…AVSQ), 297–317 (LLGY…IAVQ), 326–346 (VGVY…VVSL), 374–394 (AVMT…GFFG), 407–426 (LWWL…YYYL), and 449–469 (ALTA…FFGL).

It belongs to the complex I subunit 2 family. As to quaternary structure, NDH-1 is composed of 13 different subunits. Subunits NuoA, H, J, K, L, M, N constitute the membrane sector of the complex.

Its subcellular location is the cell inner membrane. The catalysed reaction is a quinone + NADH + 5 H(+)(in) = a quinol + NAD(+) + 4 H(+)(out). In terms of biological role, NDH-1 shuttles electrons from NADH, via FMN and iron-sulfur (Fe-S) centers, to quinones in the respiratory chain. The immediate electron acceptor for the enzyme in this species is believed to be ubiquinone. Couples the redox reaction to proton translocation (for every two electrons transferred, four hydrogen ions are translocated across the cytoplasmic membrane), and thus conserves the redox energy in a proton gradient. The polypeptide is NADH-quinone oxidoreductase subunit N (Pectobacterium atrosepticum (strain SCRI 1043 / ATCC BAA-672) (Erwinia carotovora subsp. atroseptica)).